Consider the following 107-residue polypeptide: Mitochondrial pyruvate carrier 1 (107 aa).

The next 2 helical transmembrane spans lie at 18–39 (YFMS…AALA) and 52–68 (MTLA…RFAY).

It belongs to the mitochondrial pyruvate carrier (MPC) (TC 2.A.105) family. In terms of assembly, the functional 150 kDa pyruvate import complex is a heteromer of MPC1 and MPC2.

It localises to the mitochondrion inner membrane. In terms of biological role, mediates the uptake of pyruvate into mitochondria. The polypeptide is Mitochondrial pyruvate carrier 1 (Mpc1) (Drosophila melanogaster (Fruit fly)).